Here is a 199-residue protein sequence, read N- to C-terminus: Peptidyl-tRNA hydrolase (199 aa).

Tyr15 contacts tRNA. His20 serves as the catalytic Proton acceptor. Residues Tyr66, Asn68, and Asn114 each contribute to the tRNA site.

It belongs to the PTH family. Monomer.

It is found in the cytoplasm. It catalyses the reaction an N-acyl-L-alpha-aminoacyl-tRNA + H2O = an N-acyl-L-amino acid + a tRNA + H(+). In terms of biological role, hydrolyzes ribosome-free peptidyl-tRNAs (with 1 or more amino acids incorporated), which drop off the ribosome during protein synthesis, or as a result of ribosome stalling. Functionally, catalyzes the release of premature peptidyl moieties from peptidyl-tRNA molecules trapped in stalled 50S ribosomal subunits, and thus maintains levels of free tRNAs and 50S ribosomes. The protein is Peptidyl-tRNA hydrolase of Burkholderia ambifaria (strain MC40-6).